A 395-amino-acid chain; its full sequence is PCI domain-containing protein 2 homolog (395 aa).

A PCI domain is found at 208-389; that stretch reads ITYKYFVGRR…NKLVVSKQNP (182 aa).

It belongs to the CSN12 family. In terms of assembly, component of the nuclear pore complex (NPC)-associated TREX-2/AMEX complex (anchoring and mRNA export complex), composed of e(y)2, xmas and PCID2. Interaction between the TREX-2/AMEX complex and the ORC complex is required for ORC localization to mRNPs, and consequently mRNA export. Within the TREX-2/AMEX-ORC complex, interacts with Orc3 and Orc4. Interacts with sbr/NXF1. Interacts with Moe. Interacts with nudC; required to maintain stability in the cytoplasm. In terms of processing, mono- and poly-ubiquitinated.

It is found in the nucleus. The protein resides in the cytoplasm. Its subcellular location is the nucleus membrane. The protein localises to the cytoskeleton. In terms of biological role, required for the export of nuclear mRNAs and involved in mRNA trafficking in the cytoplasm. Component of the nuclear pore complex (NPC)-associated TREX-2/AMEX complex (anchoring and mRNA export complex) which functions in docking export-competent ribonucleoprotein particles (mRNPs) to the nuclear entrance of the nuclear pore complex (nuclear basket), thereby enabling the export of mRNAs to the cytoplasm through the nuclear pores. Within the complex, specifically promotes the association of factors involved in regulating nuclear mRNA export, such as Moe, sbr/NXF1 and the ORC complex, to the mRNPs particles. In the cytoplasm, functions independently of its role in the TREX-2/AMEX complex, to promote cytoplasmic mRNA trafficking together with nudC. Associates with translationally active polysomes. The sequence is that of PCI domain-containing protein 2 homolog from Drosophila melanogaster (Fruit fly).